Reading from the N-terminus, the 208-residue chain is FMN-dependent NADH:quinone oxidoreductase (208 aa).

99-102 contacts FMN; that stretch reads MWNF.

It belongs to the azoreductase type 1 family. Homodimer. FMN is required as a cofactor.

It catalyses the reaction 2 a quinone + NADH + H(+) = 2 a 1,4-benzosemiquinone + NAD(+). The catalysed reaction is N,N-dimethyl-1,4-phenylenediamine + anthranilate + 2 NAD(+) = 2-(4-dimethylaminophenyl)diazenylbenzoate + 2 NADH + 2 H(+). In terms of biological role, quinone reductase that provides resistance to thiol-specific stress caused by electrophilic quinones. Also exhibits azoreductase activity. Catalyzes the reductive cleavage of the azo bond in aromatic azo compounds to the corresponding amines. In Brevibacillus brevis (strain 47 / JCM 6285 / NBRC 100599), this protein is FMN-dependent NADH:quinone oxidoreductase.